Consider the following 750-residue polypeptide: Photosystem I P700 chlorophyll a apoprotein A1 (750 aa).

The next 8 helical transmembrane spans lie at 72–95 (VFSA…FHGA), 158–181 (LYST…FHYH), 197–221 (LNHH…HVSL), 293–311 (TAHH…GHMY), 348–371 (WHAQ…HHMY), 387–413 (LSIF…IFMV), 435–457 (AIIS…LYIH), and 532–550 (FLVH…LILL). Residues Cys574 and Cys583 each coordinate [4Fe-4S] cluster. The next 2 membrane-spanning stretches (helical) occupy residues 590–611 (HVFL…HFSW) and 664–686 (LSAY…MFLF). His675 is a binding site for chlorophyll a'. Chlorophyll a contacts are provided by Met683 and Tyr691. Trp692 contacts phylloquinone. Residues 724-744 (AVGVAHYLLGGIATTWAFFLA) traverse the membrane as a helical segment.

This sequence belongs to the PsaA/PsaB family. In terms of assembly, the PsaA/B heterodimer binds the P700 chlorophyll special pair and subsequent electron acceptors. PSI consists of a core antenna complex that captures photons, and an electron transfer chain that converts photonic excitation into a charge separation. The eukaryotic PSI reaction center is composed of at least 11 subunits. The cofactor is P700 is a chlorophyll a/chlorophyll a' dimer, A0 is one or more chlorophyll a, A1 is one or both phylloquinones and FX is a shared 4Fe-4S iron-sulfur center..

Its subcellular location is the plastid. It is found in the chloroplast thylakoid membrane. The catalysed reaction is reduced [plastocyanin] + hnu + oxidized [2Fe-2S]-[ferredoxin] = oxidized [plastocyanin] + reduced [2Fe-2S]-[ferredoxin]. PsaA and PsaB bind P700, the primary electron donor of photosystem I (PSI), as well as the electron acceptors A0, A1 and FX. PSI is a plastocyanin-ferredoxin oxidoreductase, converting photonic excitation into a charge separation, which transfers an electron from the donor P700 chlorophyll pair to the spectroscopically characterized acceptors A0, A1, FX, FA and FB in turn. Oxidized P700 is reduced on the lumenal side of the thylakoid membrane by plastocyanin. This is Photosystem I P700 chlorophyll a apoprotein A1 from Chlorokybus atmophyticus (Soil alga).